The sequence spans 298 residues: tRNA pseudouridine synthase B (298 aa).

Asp46 acts as the Nucleophile in catalysis.

Belongs to the pseudouridine synthase TruB family. Type 1 subfamily.

It carries out the reaction uridine(55) in tRNA = pseudouridine(55) in tRNA. Functionally, responsible for synthesis of pseudouridine from uracil-55 in the psi GC loop of transfer RNAs. In Paracoccus denitrificans (strain Pd 1222), this protein is tRNA pseudouridine synthase B.